We begin with the raw amino-acid sequence, 194 residues long: Imidazoleglycerol-phosphate dehydratase (194 aa).

It belongs to the imidazoleglycerol-phosphate dehydratase family.

The protein localises to the cytoplasm. It catalyses the reaction D-erythro-1-(imidazol-4-yl)glycerol 3-phosphate = 3-(imidazol-4-yl)-2-oxopropyl phosphate + H2O. It participates in amino-acid biosynthesis; L-histidine biosynthesis; L-histidine from 5-phospho-alpha-D-ribose 1-diphosphate: step 6/9. The sequence is that of Imidazoleglycerol-phosphate dehydratase from Streptococcus gordonii (strain Challis / ATCC 35105 / BCRC 15272 / CH1 / DL1 / V288).